The chain runs to 320 residues: MKIFDYDDVQLIPEMCIVNSRKECETTATLGKHTFKLPVVPANMATIINEELAEKLARNDYFYIMHRFNVDQLKFIKNMKDKNLITSISLGVKPDEYKLVDQMVQQNLIPDYITIDIAHGHALSVKNMISYIREKMKDQVFIIAGNVTTPKAVRDLELWGADATKIEIGPGKVCITKLKTGFGTGGWQLSALKYCAKTASKPIIADGGLRVHGDIAKSIRMGASFCMIVSLFAAHLESPGKEVEINNCIYKEYYGSASEYNKSEKRYVEGKKELIKIRGSIFDTLKEMTEDLQSSISYAGGKDLQAIKRVDYVLLGDYKD.

Catalysis depends on cysteine 174, which acts as the Thioimidate intermediate. Residue 203–226 (IIADGGLRVHGDIAKSIRMGASFC) coordinates NADP(+).

It belongs to the IMPDH/GMPR family. GuaC type 2 subfamily.

The enzyme catalyses IMP + NH4(+) + NADP(+) = GMP + NADPH + 2 H(+). Catalyzes the irreversible NADPH-dependent deamination of GMP to IMP. It functions in the conversion of nucleobase, nucleoside and nucleotide derivatives of G to A nucleotides, and in maintaining the intracellular balance of A and G nucleotides. The polypeptide is GMP reductase (Mycoplasma mycoides subsp. mycoides SC (strain CCUG 32753 / NCTC 10114 / PG1)).